The primary structure comprises 235 residues: 2,3-bisphosphoglycerate-dependent phosphoglycerate mutase (235 aa).

Substrate is bound by residues 8-15 (RHGESIWN), 21-22 (TG), R58, 110-113 (ERYY), K121, 137-138 (RR), and 181-182 (GN). Catalysis depends on H9, which acts as the Tele-phosphohistidine intermediate. E110 functions as the Proton donor/acceptor in the catalytic mechanism.

This sequence belongs to the phosphoglycerate mutase family. BPG-dependent PGAM subfamily.

The catalysed reaction is (2R)-2-phosphoglycerate = (2R)-3-phosphoglycerate. It functions in the pathway carbohydrate degradation; glycolysis; pyruvate from D-glyceraldehyde 3-phosphate: step 3/5. Catalyzes the interconversion of 2-phosphoglycerate and 3-phosphoglycerate. The polypeptide is 2,3-bisphosphoglycerate-dependent phosphoglycerate mutase (Methanococcus vannielii (strain ATCC 35089 / DSM 1224 / JCM 13029 / OCM 148 / SB)).